The primary structure comprises 940 residues: Isoleucine--tRNA ligase (940 aa).

Residues 59–69 (PYANGDIHIGH) carry the 'HIGH' region motif. Glu-563 contributes to the L-isoleucyl-5'-AMP binding site. The short motif at 604-608 (KMSKS) is the 'KMSKS' region element. Position 607 (Lys-607) interacts with ATP. Cys-903, Cys-906, Cys-923, and Cys-926 together coordinate Zn(2+).

The protein belongs to the class-I aminoacyl-tRNA synthetase family. IleS type 1 subfamily. In terms of assembly, monomer. The cofactor is Zn(2+).

It localises to the cytoplasm. The catalysed reaction is tRNA(Ile) + L-isoleucine + ATP = L-isoleucyl-tRNA(Ile) + AMP + diphosphate. Its function is as follows. Catalyzes the attachment of isoleucine to tRNA(Ile). As IleRS can inadvertently accommodate and process structurally similar amino acids such as valine, to avoid such errors it has two additional distinct tRNA(Ile)-dependent editing activities. One activity is designated as 'pretransfer' editing and involves the hydrolysis of activated Val-AMP. The other activity is designated 'posttransfer' editing and involves deacylation of mischarged Val-tRNA(Ile). This Wigglesworthia glossinidia brevipalpis protein is Isoleucine--tRNA ligase.